The primary structure comprises 150 residues: D-aminoacyl-tRNA deacylase (150 aa).

Positions glycine 138–proline 139 match the Gly-cisPro motif, important for rejection of L-amino acids motif.

The protein belongs to the DTD family. In terms of assembly, homodimer.

It localises to the cytoplasm. It catalyses the reaction glycyl-tRNA(Ala) + H2O = tRNA(Ala) + glycine + H(+). It carries out the reaction a D-aminoacyl-tRNA + H2O = a tRNA + a D-alpha-amino acid + H(+). Its function is as follows. An aminoacyl-tRNA editing enzyme that deacylates mischarged D-aminoacyl-tRNAs. Also deacylates mischarged glycyl-tRNA(Ala), protecting cells against glycine mischarging by AlaRS. Acts via tRNA-based rather than protein-based catalysis; rejects L-amino acids rather than detecting D-amino acids in the active site. By recycling D-aminoacyl-tRNA to D-amino acids and free tRNA molecules, this enzyme counteracts the toxicity associated with the formation of D-aminoacyl-tRNA entities in vivo and helps enforce protein L-homochirality. This is D-aminoacyl-tRNA deacylase from Bacteroides fragilis (strain YCH46).